The primary structure comprises 273 residues: MPRLEEIDDFNDIDDLDMELAELDPSLRTPIAPKITPKVVRSQDQENPAFLPGTNNNSNSNNNSSNEKEQLSFINPKTGKVERSEAISKKDLEEVKRFQVLYPCYFDINRSHKEGRRVPKELAVENPLAKTMADAVRELGILCIFEGEKCHPQDFGNPGRIRVLFKENGQLIGAATKFKGGKRQLMKAVGEYMKRHPTTIESLREIPYGPDFDNIEFKKIPRVKGFKMNEIVPLHSPFLMGHPMTKSVYETPKITAAEKSFKPPKNKYKVVRR.

The interval 25–71 (PSLRTPIAPKITPKVVRSQDQENPAFLPGTNNNSNSNNNSSNEKEQL) is disordered. Residues 55 to 65 (NNNSNSNNNSS) show a composition bias toward low complexity.

In terms of assembly, fungal signal recognition particle (SRP) complex consists of a 7S RNA molecule (scR1) and at least six protein subunits: SRP72, SRP68, SRP54, SEC65, SRP21 and SRP14.

The protein localises to the cytoplasm. Signal-recognition-particle (SRP) assembly has a crucial role in targeting secretory proteins to the rough endoplasmic reticulum (ER) membrane. SRP is required for the cotranslational protein translocation for ER import and preferentially recognizes strongly hydrophobic signal sequences. It is involved in targeting the nascent chain-ribosome (RNC) complex to the ER and is proposed to participate in the arrest of nascent chain elongation during membrane targeting. SEC65 is required for SRP integrity. This chain is Signal recognition particle subunit SEC65 (SEC65), found in Saccharomyces cerevisiae (strain ATCC 204508 / S288c) (Baker's yeast).